A 238-amino-acid polypeptide reads, in one-letter code: Small ribosomal subunit protein uS2 (238 aa).

It belongs to the universal ribosomal protein uS2 family.

The polypeptide is Small ribosomal subunit protein uS2 (Prochlorococcus marinus (strain MIT 9211)).